The primary structure comprises 316 residues: Small ribosomal subunit biogenesis GTPase RsgA (316 aa).

One can recognise a CP-type G domain in the interval 83–248 (DQYKSKLFAA…LIDSPGFQEF (166 aa)). GTP is bound by residues 131 to 134 (NKTD) and 185 to 193 (GQSGMGKST). Residues C272, C277, H279, and C285 each coordinate Zn(2+).

It belongs to the TRAFAC class YlqF/YawG GTPase family. RsgA subfamily. In terms of assembly, monomer. Associates with 30S ribosomal subunit, binds 16S rRNA. Zn(2+) serves as cofactor.

It localises to the cytoplasm. One of several proteins that assist in the late maturation steps of the functional core of the 30S ribosomal subunit. Helps release RbfA from mature subunits. May play a role in the assembly of ribosomal proteins into the subunit. Circularly permuted GTPase that catalyzes slow GTP hydrolysis, GTPase activity is stimulated by the 30S ribosomal subunit. This is Small ribosomal subunit biogenesis GTPase RsgA from Paraburkholderia phytofirmans (strain DSM 17436 / LMG 22146 / PsJN) (Burkholderia phytofirmans).